A 338-amino-acid chain; its full sequence is Anthranilate phosphoribosyltransferase (338 aa).

Residues Gly-81, 84 to 85, Thr-89, 91 to 94, 109 to 117, and Ser-121 contribute to the 5-phospho-alpha-D-ribose 1-diphosphate site; these read GD, NVST, and KHGNRSVSS. An anthranilate-binding site is contributed by Gly-81. Residue Ser-93 coordinates Mg(2+). Asn-112 contributes to the anthranilate binding site. Arg-167 is a binding site for anthranilate. 2 residues coordinate Mg(2+): Asp-226 and Glu-227.

This sequence belongs to the anthranilate phosphoribosyltransferase family. In terms of assembly, homodimer. Mg(2+) is required as a cofactor.

The enzyme catalyses N-(5-phospho-beta-D-ribosyl)anthranilate + diphosphate = 5-phospho-alpha-D-ribose 1-diphosphate + anthranilate. It functions in the pathway amino-acid biosynthesis; L-tryptophan biosynthesis; L-tryptophan from chorismate: step 2/5. Catalyzes the transfer of the phosphoribosyl group of 5-phosphorylribose-1-pyrophosphate (PRPP) to anthranilate to yield N-(5'-phosphoribosyl)-anthranilate (PRA). The sequence is that of Anthranilate phosphoribosyltransferase from Alkalilimnicola ehrlichii (strain ATCC BAA-1101 / DSM 17681 / MLHE-1).